Reading from the N-terminus, the 106-residue chain is Transcription initiation factor IIA subunit 2 (106 aa).

It belongs to the TFIIA subunit 2 family. TFIIA is a heterodimer of the large unprocessed subunit 1 and a small subunit gamma. It was originally believed to be a heterotrimer of an alpha, a beta and a gamma subunit.

Its subcellular location is the nucleus. Functionally, TFIIA is a component of the transcription machinery of RNA polymerase II and plays an important role in transcriptional activation. TFIIA in a complex with TBP mediates transcriptional activity. The protein is Transcription initiation factor IIA subunit 2 (TFIIA-S) of Arabidopsis thaliana (Mouse-ear cress).